Reading from the N-terminus, the 206-residue chain is Small ribosomal subunit protein uS2 (206 aa).

The protein belongs to the universal ribosomal protein uS2 family.

The protein is Small ribosomal subunit protein uS2 of Pyrobaculum neutrophilum (strain DSM 2338 / JCM 9278 / NBRC 100436 / V24Sta) (Thermoproteus neutrophilus).